Here is a 324-residue protein sequence, read N- to C-terminus: NADH-ubiquinone oxidoreductase chain 1 (324 aa).

Helical transmembrane passes span 3 to 23, 77 to 97, 104 to 124, 150 to 170, 174 to 194, 226 to 246, 250 to 270, and 297 to 317; these read FILSLIGSLLLIICVLVSVAF, ISPIFSLFLSLFVWMCMPFFV, LGGLFFLCCTSLGVYTVMVAG, LALIMLSFIFLIGSYNMIYFF, IYMWFLIILFPMSLVWLTISL, LIFMAEYASILFMSMLFCVIF, DVFNLLFYVKLTFISFVFIWA, and YLLFFIGFKILLFSFLLWIFF.

The protein belongs to the complex I subunit 1 family.

Its subcellular location is the mitochondrion inner membrane. It carries out the reaction a ubiquinone + NADH + 5 H(+)(in) = a ubiquinol + NAD(+) + 4 H(+)(out). Its function is as follows. Core subunit of the mitochondrial membrane respiratory chain NADH dehydrogenase (Complex I) that is believed to belong to the minimal assembly required for catalysis. Complex I functions in the transfer of electrons from NADH to the respiratory chain. The immediate electron acceptor for the enzyme is believed to be ubiquinone. This Drosophila yakuba (Fruit fly) protein is NADH-ubiquinone oxidoreductase chain 1 (mt:ND1).